We begin with the raw amino-acid sequence, 630 residues long: MTSIGIDLGTTYSCVGVWLNDRVEIIANDQGNRTTPSYVAFNDTERLIGDAAKNQVAMNPINTVFDAKRLIGRKFSDSVVQSDMKHWPFKVITNKNDDKPLIQVDFKGETKTFSPEEISSMVLSKMKETAESYLGKPVNNAVITVPAYFNDGQRQATKDAGTISKLNVQRIINEPSAAAIAYGLDKKGSKSGEIKVLIFDLGGGTFDVSLLSIDDGVFEVLATAGDTHLGGEDFDNRLVNHFVDEFKRKHKKDIMGNQRALRRLRTACERAKRTLSSSSQASVEIDSLYDGIDFYTSITRARFEELCSDLFNNCIEPVEKVLKDCKLDKKSIDEIVLVGGSTRIPKVQQLIQNLFNGKELNKSINPDEAVAYGAAVQAAILSGDKSSRISELIFIDVAPLSLGIETVGGVMTNIVPRNTIIPCKKTQTFSTHTDNQSGVLIQVYEGERTMTKDNNLLGKFELTGIPPAPRGTPQIEVSFDVDSNGILNVTAEDKTTKKVEKITITNDKGRLSLKDITKMVEDAEKFKEQDQQQKERIESKNNLENYIFSVKNSINDQKIISKLSKSDKNIIESETESTLKWLESNQSAEKDEFNQKISDLESIVNPILSKFYQGNNNPKPTTTTFNQDLD.

The segment at 611–630 (FYQGNNNPKPTTTTFNQDLD) is disordered. Low complexity predominate over residues 615–630 (NNNPKPTTTTFNQDLD).

It belongs to the heat shock protein 70 family.

May function in protein folding and assembly, and disassembly of protein complexes. The sequence is that of Heat shock cognate 70 kDa protein 3 from Dictyostelium discoideum (Social amoeba).